Consider the following 209-residue polypeptide: MNEDLTNSTEYKRYGHDYAKYPRRIAEELQHYGGNSFANFFRDEGVLYKEILCDACDHLKVNYNEESATSLIEQNMLSKLLKDSLEKMSRREIKELCNELGMTNIDKVIGENKQVLIASTLTLFKAGGSHSYALAVSVADAMVRQTLGHXACYVVGKVALKKTLGVLAGPIGWVITGALVSINLAGPAYRVTVPACVLIATLRLKLKAK.

This sequence belongs to the UPF0174 family.

This is UPF0174 protein HP_1587 from Helicobacter pylori (strain ATCC 700392 / 26695) (Campylobacter pylori).